The primary structure comprises 103 residues: MYAVFQSGGKQHRVSEGQTIRLEKLDIATGEAVEFDQILMIANGEDIKIGVPYVDGGKIKAEVVAHGRGEKIKIVKFRRRKHHRKQQGHRQWFTDVKITGISA.

It belongs to the bacterial ribosomal protein bL21 family. In terms of assembly, part of the 50S ribosomal subunit. Contacts protein L20.

Its function is as follows. This protein binds to 23S rRNA in the presence of protein L20. This chain is Large ribosomal subunit protein bL21, found in Serratia proteamaculans (strain 568).